Consider the following 146-residue polypeptide: Large ribosomal subunit protein uL15x (146 aa).

Basic residues-rich tracts occupy residues 1-14 and 21-30; these read MTTR…KRGH and RIGKHRKHPG. Residues 1-35 are disordered; the sequence is MTTRFKKNRKKRGHVSAGHGRIGKHRKHPGGRGNA.

This sequence belongs to the universal ribosomal protein uL15 family.

The polypeptide is Large ribosomal subunit protein uL15x (RPL27AC) (Arabidopsis thaliana (Mouse-ear cress)).